We begin with the raw amino-acid sequence, 216 residues long: Ethylene-responsive transcription factor ERF016 (216 aa).

Positions 6–63 (KYTGVRKRKWGKWVAEIRLPNSRDRIWLGSFDSAEKAARAFDAALYCLRGPGARFNFP) form a DNA-binding region, AP2/ERF. Residues 121–145 (EINSGSGGPTLGQVGEDNNNEGNSN) are disordered. Residues 135-145 (GEDNNNEGNSN) are compositionally biased toward low complexity.

This sequence belongs to the AP2/ERF transcription factor family. ERF subfamily.

It localises to the nucleus. Its function is as follows. Probably acts as a transcriptional activator. Binds to the GCC-box pathogenesis-related promoter element. May be involved in the regulation of gene expression by stress factors and by components of stress signal transduction pathways. This chain is Ethylene-responsive transcription factor ERF016 (ERF016), found in Arabidopsis thaliana (Mouse-ear cress).